The sequence spans 165 residues: Ribosome maturation factor RimM (165 aa).

Positions 89–161 constitute a PRC barrel domain; it reads EADTHYVVDL…KIVIKPVRQW (73 aa).

Belongs to the RimM family. In terms of assembly, binds ribosomal protein uS19.

Its subcellular location is the cytoplasm. Its function is as follows. An accessory protein needed during the final step in the assembly of 30S ribosomal subunit, possibly for assembly of the head region. Essential for efficient processing of 16S rRNA. May be needed both before and after RbfA during the maturation of 16S rRNA. It has affinity for free ribosomal 30S subunits but not for 70S ribosomes. In Clostridium botulinum (strain Eklund 17B / Type B), this protein is Ribosome maturation factor RimM.